Reading from the N-terminus, the 188-residue chain is dCTP deaminase, dUMP-forming (188 aa).

Residues 101–106 (KSSLGR), Asp119, 127–129 (TLE), Gln148, Tyr162, and Gln174 each bind dCTP. Residue Glu129 is the Proton donor/acceptor of the active site.

Belongs to the dCTP deaminase family. In terms of assembly, homotrimer.

It catalyses the reaction dCTP + 2 H2O = dUMP + NH4(+) + diphosphate. It functions in the pathway pyrimidine metabolism; dUMP biosynthesis; dUMP from dCTP: step 1/1. Functionally, bifunctional enzyme that catalyzes both the deamination of dCTP to dUTP and the hydrolysis of dUTP to dUMP without releasing the toxic dUTP intermediate. This Corynebacterium jeikeium (strain K411) protein is dCTP deaminase, dUMP-forming.